Reading from the N-terminus, the 1070-residue chain is Phosphatidylinositol 4,5-bisphosphate 3-kinase catalytic subunit beta isoform (1070 aa).

The 90-residue stretch at 26-115 (SDGSIPVDFL…LPVLKLVTRS (90 aa)) folds into the PI3K-ABD domain. The 92-residue stretch at 194 to 285 (GGKLIVAVHF…RALPHFILVE (92 aa)) folds into the PI3K-RBD domain. Ser324 carries the post-translational modification Phosphoserine. The C2 PI3K-type domain occupies 327–496 (WENNNPFQIV…NATALHVKFP (170 aa)). A Nuclear localization signal motif is present at residues 410–418 (KVKTKKSTK). The PIK helical domain occupies 524-701 (ANVSSRGGKK…GVILEAYCRG (178 aa)). Residues 772–1053 (YVEKCKYMDS…KFDEALRESW (282 aa)) enclose the PI3K/PI4K catalytic domain. Residues 778 to 784 (YMDSKMK) form a G-loop region. Residues 916 to 924 (GIGDRHSDN) form a catalytic loop region. The segment at 935 to 961 (HIDFGHILGNFKSKFGIKRERVPFILT) is activation loop. Ser1070 is modified (phosphoserine; by autocatalysis).

It belongs to the PI3/PI4-kinase family. Heterodimer of a catalytic subunit PIK3CB and a p85 regulatory subunit (PIK3R1, PIK3R2 or PIK3R3). Interaction with PIK3R2 is required for nuclear localization and nuclear export. Part of a complex with PIK3R1 and PTEN. Binding to PTEN may antagonize the lipid kinase activity under normal growth conditions. Part of a complex involved in autophagosome formation composed of PIK3C3 and PIK3R4. Interacts with BECN1, ATG14 and RAB5A. Autophosphorylation at Ser-1070 negatively regulates the phosphatidylinositol-4,5-bisphosphate 3-kinase activity. Expressed ubiquitously.

It localises to the cytoplasm. The protein resides in the nucleus. It carries out the reaction a 1,2-diacyl-sn-glycero-3-phospho-(1D-myo-inositol-4,5-bisphosphate) + ATP = a 1,2-diacyl-sn-glycero-3-phospho-(1D-myo-inositol-3,4,5-trisphosphate) + ADP + H(+). The catalysed reaction is 1-octadecanoyl-2-(5Z,8Z,11Z,14Z)-eicosatetraenoyl-sn-glycero-3-phospho-1D-myo-inositol 4,5-bisphosphate + ATP = 1-octadecanoyl-2-(5Z,8Z,11Z,14Z-eicosatetraenoyl)-sn-glycero-3-phospho-(1D-myo-inositol 3,4,5-triphosphate) + ADP + H(+). It catalyses the reaction L-seryl-[protein] + ATP = O-phospho-L-seryl-[protein] + ADP + H(+). Its pathway is phospholipid metabolism; phosphatidylinositol phosphate biosynthesis. Functionally, phosphoinositide-3-kinase (PI3K) phosphorylates phosphatidylinositol derivatives at position 3 of the inositol ring to produce 3-phosphoinositides. Uses ATP and PtdIns(4,5)P2 (phosphatidylinositol 4,5-bisphosphate) to generate phosphatidylinositol 3,4,5-trisphosphate (PIP3). PIP3 plays a key role by recruiting PH domain-containing proteins to the membrane, including AKT1 and PDPK1, activating signaling cascades involved in cell growth, survival, proliferation, motility and morphology. Involved in the activation of AKT1 upon stimulation by G-protein coupled receptors (GPCRs) ligands such as CXCL12, sphingosine 1-phosphate, and lysophosphatidic acid. May also act downstream receptor tyrosine kinases. Required in different signaling pathways for stable platelet adhesion and aggregation. Plays a role in platelet activation signaling triggered by GPCRs, alpha-IIb/beta-3 integrins (ITGA2B/ ITGB3) and ITAM (immunoreceptor tyrosine-based activation motif)-bearing receptors such as GP6. Regulates the strength of adhesion of ITGA2B/ ITGB3 activated receptors necessary for the cellular transmission of contractile forces. Required for platelet aggregation induced by F2 (thrombin) and thromboxane A2 (TXA2). Has a role in cell survival. May have a role in cell migration. Involved in the early stage of autophagosome formation. Modulates the intracellular level of PtdIns3P (phosphatidylinositol 3-phosphate) and activates PIK3C3 kinase activity. May act as a scaffold, independently of its lipid kinase activity to positively regulate autophagy. May have a role in insulin signaling as scaffolding protein in which the lipid kinase activity is not required. May have a kinase-independent function in regulating cell proliferation and in clathrin-mediated endocytosis. Mediator of oncogenic signal in cell lines lacking PTEN. The lipid kinase activity is necessary for its role in oncogenic transformation. Required for the growth of ERBB2 and RAS driven tumors. Also has a protein kinase activity showing autophosphorylation. The protein is Phosphatidylinositol 4,5-bisphosphate 3-kinase catalytic subunit beta isoform (PIK3CB) of Homo sapiens (Human).